The chain runs to 270 residues: uncharacterized protein (270 aa).

Positions 1-23 (MKKLLIILAATLVLVLGSSGNFR) are cleaved as a signal peptide.

This is an uncharacterized protein from Archaeoglobus fulgidus (strain ATCC 49558 / DSM 4304 / JCM 9628 / NBRC 100126 / VC-16).